Here is a 143-residue protein sequence, read N- to C-terminus: Hypoxic response protein 1 (143 aa).

CBS domains follow at residues 8 to 65 (MNAG…GLDP) and 73 to 131 (LARD…IVQF). A disulfide bridge connects residues C14 and C39. Zn(2+)-binding residues include H97 and H122.

As to quaternary structure, homodimer.

It is found in the secreted. Functionally, unlike some other CBS-domain containing proteins does not seem to bind AMP. This Mycobacterium tuberculosis (strain CDC 1551 / Oshkosh) protein is Hypoxic response protein 1 (hrp1).